The primary structure comprises 1016 residues: Calmodulin-binding transcription activator 4 (1016 aa).

The segment at residues 38–164 (ISTLYQEAHS…YRDVSEREEG (127 aa)) is a DNA-binding region (CG-1). The tract at residues 324-343 (KNGSGPSGGTGGSGDQGSES) is disordered. The span at 328–338 (GPSGGTGGSGD) shows a compositional bias: gly residues. ANK repeat units follow at residues 647–676 (QEQGIIHMVAGLGFEWAFYPILAHGVNVDF), 680–709 (KGWSALHWAAQFGSEKMVAALIASGASAGA), and 719–748 (NGKTAASIAASNGHKGLAGYLSEVALTNHL). A disordered region spans residues 753–786 (LEETENSKDTAQVQTEKTLNSISEQSPSGNEDQV). Residues 761–785 (DTAQVQTEKTLNSISEQSPSGNEDQ) show a composition bias toward polar residues. IQ domains lie at 798 to 827 (AAQAAARIQAAFRAHSFRKRKQREAALVAC), 855 to 884 (YNSAALSIQKNFRGYKDRKCFLELRQKVVK), and 878 to 907 (LRQKVVKIQAHVRGYQIRKNYKVICWAVRI). Residues 903 to 925 (WAVRILDKVVLRWRRKGVGLRGF) are calmodulin-binding. 2 positions are modified to phosphoserine: S935 and S962.

Belongs to the CAMTA family. Expressed in roots, stems, leaves, flowers and siliques.

The protein localises to the nucleus. Transcription activator that binds to the DNA consensus sequence 5'-[ACG]CGCG[GTC]-3'. Regulates transcriptional activity in response to calcium signals. Binds calmodulin in a calcium-dependent manner. Involved together with CAMTA2 and CAMTA3 in the positive regulation of a general stress response. In Arabidopsis thaliana (Mouse-ear cress), this protein is Calmodulin-binding transcription activator 4.